A 500-amino-acid polypeptide reads, in one-letter code: Maturase K (500 aa).

Belongs to the intron maturase 2 family. MatK subfamily.

Its subcellular location is the plastid. It localises to the chloroplast. Functionally, usually encoded in the trnK tRNA gene intron. Probably assists in splicing its own and other chloroplast group II introns. The polypeptide is Maturase K (Brasenia schreberi (Water shield)).